Here is a 358-residue protein sequence, read N- to C-terminus: Neuronal-specific septin-3 (358 aa).

The span at 1-10 shows a compositional bias: basic and acidic residues; sequence MSKGLPETRT. The interval 1-30 is disordered; that stretch reads MSKGLPETRTDAAMSELVPEPRPKPAVPMK. A Septin-type G domain is found at 58 to 331; it reads TGFDFNIMVV…ETYRAKRLND (274 aa). Residues 68 to 75 form a G1 motif region; it reads GQSGLGKS. Residue 68–75 participates in GTP binding; it reads GQSGLGKS. Ser-91 bears the Phosphoserine mark. A GTP-binding site is contributed by Thr-102. Positions 125–128 are G3 motif; that stretch reads DTPG. Positions 207–210 are G4 motif; it reads AKAD. Residues 208 to 216, Gly-265, and Arg-280 contribute to the GTP site; that span reads KADTMTLEE.

This sequence belongs to the TRAFAC class TrmE-Era-EngA-EngB-Septin-like GTPase superfamily. Septin GTPase family. As to quaternary structure, septins polymerize into heterooligomeric protein complexes that form filaments, and can associate with cellular membranes, actin filaments and microtubules. GTPase activity is required for filament formation. Post-translationally, phosphorylated by PKG on serine residues. Phosphorylated by PKG on Ser-91. As to expression, brain-specific.

Its subcellular location is the cytoplasm. The protein resides in the cytoskeleton. The protein localises to the synapse. Its function is as follows. Filament-forming cytoskeletal GTPase. May play a role in cytokinesis (Potential). This chain is Neuronal-specific septin-3, found in Homo sapiens (Human).